The chain runs to 130 residues: Small ribosomal subunit protein uS11 (130 aa).

This sequence belongs to the universal ribosomal protein uS11 family. In terms of assembly, part of the 30S ribosomal subunit. Interacts with proteins S7 and S18. Binds to IF-3.

Its function is as follows. Located on the platform of the 30S subunit, it bridges several disparate RNA helices of the 16S rRNA. Forms part of the Shine-Dalgarno cleft in the 70S ribosome. The sequence is that of Small ribosomal subunit protein uS11 from Prochlorococcus marinus (strain NATL2A).